The primary structure comprises 397 residues: FAD-dependent monooxygenase trt8 (397 aa).

Tyr-53 is a catalytic residue. Residues Asp-145 and Ala-158 each coordinate FAD.

It belongs to the paxM FAD-dependent monooxygenase family. The cofactor is FAD.

It participates in secondary metabolite biosynthesis; terpenoid biosynthesis. In terms of biological role, FAD-dependent monooxygenase; part of the gene cluster that mediates the biosynthesis of terretonin, a fungal meroterpenoid that acts as a mycotoxin. The first step of the pathway is the synthesis of 3,5-dimethylorsellinic acid (DMOA) by the polyketide synthase trt4. DMOA is then prenylated into farnesyl-DMOA by the polyprenyl transferase trt2. Methylation by the methyltransferase trt5 then leads to farnesyl-DMOA methyl ester which is further subject to epoxidation by the FAD-dependent monooxygenase trt8 to yield epoxyfarnesyl-DMOA methyl ester. Cyclization of epoxyfarnesyl-DMOA methyl ester by the terpene cyclase trt1 leads to a tetracycle intermediate which is in turn converted to preterretonin. Dehydrogenase trt9 comes next to transform preterretonin to preterrenoid. The FAD-dependent monooxygenase trt3 is then required for the C-hydroxylation at C16 of preterrenoid to yield terrenoid. The cytochrome P450 trt6 catalyzes three successive oxidations to transform terrenoid into an unstable intermediate, which then undergoes the D-ring expansion and unusual rearrangement of the methoxy group to afford the core skeleton of terretonin. Trt14 catalyzes the D-ring expansion of terretonin involving intramolecular methoxy rearrangement as well as the hydrolysis of the expanded D-ring and the methyl ester moiety. Finally, the nonheme iron-dependent dioxygenase trt7 accomplishes the last two oxidation reactions steps to complete the biosynthesis of terretonin. Terretonin C is produced via spontaneous decarboxylation of the terretonin precursor. Another shunt product of the terretonin biosynthesis is dihydrofarnesyl-DMOA, derived from epoxyfarnesyl-DMOA through hydrolysis of the epoxide. The protein is FAD-dependent monooxygenase trt8 of Aspergillus terreus (strain NIH 2624 / FGSC A1156).